A 1013-amino-acid chain; its full sequence is RNA-binding protein 44 (1013 aa).

Disordered regions lie at residues 1–25 (MQAT…FQND) and 56–94 (LATE…IFSQ). Residues 56 to 76 (LATEERASDKENSIVDQRDLS) show a composition bias toward basic and acidic residues. The segment covering 78–94 (LSFSENQDSNRGNIFSQ) has biased composition (polar residues). Phosphoserine is present on residues S365, S368, S510, S681, and S688. Residues 792-865 (FLIHVGGLCP…KSVTVRLVKI (74 aa)) form the RRM domain. The segment at 905–925 (RAKSRQLESEQDSEFPPLDQG) is disordered.

In terms of assembly, homodimer. Interacts with TEX14. Highly expressed in testis. Also expressed in other tissues at lower level.

It localises to the cytoplasm. Its function is as follows. Component of intercellular bridges during meiosis. Intercellular bridges are evolutionarily conserved structures that connect differentiating germ cells. Not required for fertility. The polypeptide is RNA-binding protein 44 (Rbm44) (Mus musculus (Mouse)).